The primary structure comprises 177 residues: RNA silencing suppressor (177 aa).

Homooctamer. The eight monomers assemble into a closed ring that binds RNA.

Its subcellular location is the host cytoplasm. Its function is as follows. Acts as a suppressor of RNA-mediated gene silencing, also known as post-transcriptional gene silencing (PTGS), a mechanism of plant viral defense that limits the accumulation of viral RNAs. Binds to ssRNAs and dsRNAs in vitro. Also functions as a replication enhancer. This Beta vulgaris (Sugar beet) protein is RNA silencing suppressor.